A 1183-amino-acid chain; its full sequence is Translation initiation factor IF-2 (1183 aa).

Disordered stretches follow at residues 65 to 512 (SSKN…KVHI) and 540 to 579 (LARP…AMEL). Basic and acidic residues predominate over residues 83–99 (TQKDQKTEPKKKNHDQT). A compositionally biased stretch (polar residues) spans 100–130 (ELSQAKLNTLLKPSQTLIKSQGSSQANNQKA). Residues 220–229 (PKIDIQDKKP) are compositionally biased toward basic and acidic residues. The span at 231–270 (QPNNQKAKTRINQGEISPQKVGQGNIQKIKSQNKQNAPSR) shows a compositional bias: polar residues. Over residues 288–304 (IRKEKPVNKPHTNEVRN) the composition is skewed to basic and acidic residues. 2 stretches are compositionally biased toward polar residues: residues 321–336 (ANRQ…NNRI) and 357–367 (NRTTQGQNRPG). Residues 485–499 (GRPDWDDSAKLDALR) show a composition bias toward basic and acidic residues. Basic residues-rich tracts occupy residues 544–553 (SKPKVGKRNN) and 560–574 (LKKR…RQRR). One can recognise a tr-type G domain in the interval 675–847 (RRPPVVTVMG…VLLVTEVEDL (173 aa)). The interval 684–691 (GHVDHGKT) is G1. 684–691 (GHVDHGKT) contacts GTP. The interval 709 to 713 (GITQH) is G2. The G3 stretch occupies residues 734 to 737 (DTPG). Residues 734–738 (DTPGH) and 788–791 (NKID) each bind GTP. The G4 stretch occupies residues 788 to 791 (NKID). Residues 824–826 (SAI) form a G5 region.

The protein belongs to the TRAFAC class translation factor GTPase superfamily. Classic translation factor GTPase family. IF-2 subfamily.

The protein localises to the cytoplasm. Its function is as follows. One of the essential components for the initiation of protein synthesis. Protects formylmethionyl-tRNA from spontaneous hydrolysis and promotes its binding to the 30S ribosomal subunits. Also involved in the hydrolysis of GTP during the formation of the 70S ribosomal complex. In Prochlorococcus marinus (strain NATL2A), this protein is Translation initiation factor IF-2.